The primary structure comprises 404 residues: tRNA pseudouridine(31) synthase (404 aa).

Residue Asp-168 is part of the active site.

The protein belongs to the pseudouridine synthase RluA family.

It is found in the cytoplasm. Its subcellular location is the mitochondrion. It catalyses the reaction uridine(31) in tRNA = pseudouridine(31) in tRNA. Catalyzes the formation of pseudouridine at position 31 in the psi GC loop of tRNAS. The chain is tRNA pseudouridine(31) synthase (PUS6) from Saccharomyces cerevisiae (strain ATCC 204508 / S288c) (Baker's yeast).